A 138-amino-acid chain; its full sequence is Transcription antitermination protein NusB (138 aa).

Belongs to the NusB family.

Its function is as follows. Involved in transcription antitermination. Required for transcription of ribosomal RNA (rRNA) genes. Binds specifically to the boxA antiterminator sequence of the ribosomal RNA (rrn) operons. In Geobacter sulfurreducens (strain ATCC 51573 / DSM 12127 / PCA), this protein is Transcription antitermination protein NusB.